A 185-amino-acid chain; its full sequence is Ribosome-recycling factor (185 aa).

The protein belongs to the RRF family.

Its subcellular location is the cytoplasm. Its function is as follows. Responsible for the release of ribosomes from messenger RNA at the termination of protein biosynthesis. May increase the efficiency of translation by recycling ribosomes from one round of translation to another. The polypeptide is Ribosome-recycling factor (Thermosipho melanesiensis (strain DSM 12029 / CIP 104789 / BI429)).